The following is a 446-amino-acid chain: Alkylglycerol monooxygenase (446 aa).

2 helical membrane-spanning segments follow: residues 43–63 (ATVY…AWKG) and 110–130 (WDSP…YYWF). A Fatty acid hydroxylase domain is found at 118 to 248 (LTFLGVDFGY…LIIWDRMFGT (131 aa)). The Histidine box-1 signature appears at 131–135 (HRMAH). The Histidine box-2 signature appears at 144 to 148 (HQTHH). Residues 167 to 187 (YFSWMFYWPMAFCIPPSVFAV) traverse the membrane as a helical segment. The Histidine box-3 motif lies at 220–224 (HRVHH). Transmembrane regions (helical) follow at residues 339 to 359 (MMHF…KLIL), 362 to 382 (ATLL…GFIF), and 412 to 434 (VPYL…GLKA).

It belongs to the sterol desaturase family. TMEM195 subfamily. The cofactor is Fe cation.

The protein resides in the endoplasmic reticulum membrane. It catalyses the reaction 1-O-(1,2-saturated-alkyl)-sn-glycerol + (6R)-L-erythro-5,6,7,8-tetrahydrobiopterin + O2 = a 1-(1-hydroxyalkyl)-sn-glycerol + (6R)-L-erythro-6,7-dihydrobiopterin + H2O. In terms of biological role, glyceryl-ether monooxygenase that cleaves the O-alkyl bond of ether lipids. Ether lipids are essential components of brain membranes. This Xenopus tropicalis (Western clawed frog) protein is Alkylglycerol monooxygenase (agmo).